The following is an 84-amino-acid chain: Elongation factor 1-beta (84 aa).

It belongs to the EF-1-beta/EF-1-delta family.

Promotes the exchange of GDP for GTP in EF-1-alpha/GDP, thus allowing the regeneration of EF-1-alpha/GTP that could then be used to form the ternary complex EF-1-alpha/GTP/AAtRNA. The chain is Elongation factor 1-beta from Methanoculleus marisnigri (strain ATCC 35101 / DSM 1498 / JR1).